Reading from the N-terminus, the 275-residue chain is 4-hydroxy-tetrahydrodipicolinate reductase (275 aa).

Residues 13 to 18 (GAAGKM), 108 to 110 (GTT), and 134 to 137 (APNF) each bind NAD(+). His-164 acts as the Proton donor/acceptor in catalysis. His-165 is a binding site for (S)-2,3,4,5-tetrahydrodipicolinate. The active-site Proton donor is the Lys-168. Residue 174 to 175 (GT) participates in (S)-2,3,4,5-tetrahydrodipicolinate binding.

The protein belongs to the DapB family.

Its subcellular location is the cytoplasm. The catalysed reaction is (S)-2,3,4,5-tetrahydrodipicolinate + NAD(+) + H2O = (2S,4S)-4-hydroxy-2,3,4,5-tetrahydrodipicolinate + NADH + H(+). It catalyses the reaction (S)-2,3,4,5-tetrahydrodipicolinate + NADP(+) + H2O = (2S,4S)-4-hydroxy-2,3,4,5-tetrahydrodipicolinate + NADPH + H(+). It participates in amino-acid biosynthesis; L-lysine biosynthesis via DAP pathway; (S)-tetrahydrodipicolinate from L-aspartate: step 4/4. Catalyzes the conversion of 4-hydroxy-tetrahydrodipicolinate (HTPA) to tetrahydrodipicolinate. This is 4-hydroxy-tetrahydrodipicolinate reductase from Synechocystis sp. (strain ATCC 27184 / PCC 6803 / Kazusa).